The following is a 1338-amino-acid chain: ABC-type transporter kk1G (1338 aa).

Residues 1–21 form a disordered region; it reads MSAIELPPLRSRSEEAARAEH. Residues 11–21 are compositionally biased toward basic and acidic residues; sequence SRSEEAARAEH. Transmembrane regions (helical) follow at residues 75-95, 130-150, 203-223, 230-250, 312-332, and 340-360; these read YFLI…MPLM, LYIF…MLAI, HFAT…VALV, LIAS…FPPF, TMSP…WFGI, and ISSV…VMNI. Residues 80 to 372 form the ABC transmembrane type-1 1 domain; it reads LCCFTSIGAG…VASPIISIAK (293 aa). An ABC transporter 1 domain is found at 405–706; sequence ITFINVAFSY…GDGVYYGLVH (302 aa). 440–447 contributes to the ATP binding site; it reads GPSGSGKS. Disordered regions lie at residues 473–518 and 715–747; these read EIPS…TCTG and EDDD…HASR. The next 6 membrane-spanning stretches (helical) occupy residues 777-797, 816-836, 895-917, 919-941, 1003-1023, and 1037-1057; these read VCCI…YIFA, FWAG…YLLG, MSMA…VYGW, LSLV…RTRL, IIFA…FWYG, and FFIV…WFSF. The region spanning 777–1063 is the ABC transmembrane type-1 2 domain; sequence VCCIGILGAG…WFSFTPSMAQ (287 aa). One can recognise an ABC transporter 2 domain in the interval 1096–1333; that stretch reads IEFQHVSFKY…KGVYWQMCQA (238 aa). Residue 1130 to 1137 coordinates ATP; sequence GSSGCGKS.

This sequence belongs to the ABC transporter superfamily. ABCB family. Multidrug resistance exporter (TC 3.A.1.201) subfamily.

Its subcellular location is the cell membrane. It participates in secondary metabolite biosynthesis. Its function is as follows. ABC transporter; part of the gene cluster that mediates the biosynthesis of KK-1, a novel cyclic depsipeptide with 10 residues which is a promising active compound with high activity against many plant pathogens, especially Botrytis cinerea. Is probably directly involved in the secretion of KK-1 and thus confers self-tolerance against KK-1. The protein is ABC-type transporter kk1G of Curvularia clavata.